Here is a 267-residue protein sequence, read N- to C-terminus: Myeloid leukemia factor 1 (267 aa).

Phosphoserine occurs at positions 6, 8, 32, and 34. The disordered stretch occupies residues 39 to 67; sequence RDLLSISDGRGRTHNRRERDDGEDSLTHA. Residues 50–125 are interaction with COPS3; sequence RTHNRRERDD…VGDEPPKVFQ (76 aa).

Belongs to the MLF family. As to quaternary structure, interacts with CENPU. Also interacts with NRBP1/MADM, YWHAZ/14-3-3-zeta and HNRPUL2/MANP. NRBP1 recruits a serine kinase which phosphorylates both itself and MLF1. Phosphorylated MLF1 then binds to YWHAZ and is retained in the cytoplasm. Retained in the nucleus by binding to HNRPUL2. Binds to COPS3/CSN3 which is required for suppression of COP1 and activation of p53. In terms of processing, phosphorylation is required for binding to YWHAZ. In terms of tissue distribution, highly expressed in skeletal muscle, heart, testis. Also found in lung, but not in spleen, thymus, bone marrow, liver and kidney.

Its subcellular location is the cytoplasm. It localises to the nucleus. The protein resides in the cell projection. It is found in the cilium. The protein localises to the cytoskeleton. Its subcellular location is the cilium basal body. Functionally, involved in lineage commitment of primary hemopoietic progenitors by restricting erythroid formation and enhancing myeloid formation. Interferes with erythropoietin-induced erythroid terminal differentiation by preventing cells from exiting the cell cycle through suppression of CDKN1B/p27Kip1 levels. Suppresses COP1 activity via CSN3 which activates p53 and induces cell cycle arrest. Binds DNA and affects the expression of a number of genes so may function as a transcription factor in the nucleus. The chain is Myeloid leukemia factor 1 (Mlf1) from Mus musculus (Mouse).